A 1343-amino-acid chain; its full sequence is DNA-directed RNA polymerase subunit beta (1343 aa).

Belongs to the RNA polymerase beta chain family. As to quaternary structure, the RNAP catalytic core consists of 2 alpha, 1 beta, 1 beta' and 1 omega subunit. When a sigma factor is associated with the core the holoenzyme is formed, which can initiate transcription.

It carries out the reaction RNA(n) + a ribonucleoside 5'-triphosphate = RNA(n+1) + diphosphate. In terms of biological role, DNA-dependent RNA polymerase catalyzes the transcription of DNA into RNA using the four ribonucleoside triphosphates as substrates. The chain is DNA-directed RNA polymerase subunit beta from Shewanella baltica (strain OS223).